A 301-amino-acid chain; its full sequence is Mitochondrial ornithine transporter 1 (301 aa).

Transmembrane regions (helical) follow at residues 5 to 25 (PAIQAAIDLTAGAAGGTACVL), 68 to 88 (SPALIANIAENSVLFMCYGFC), 110 to 130 (AAAGSFASAFAALVLCPTELV), 168 to 188 (GFYHGLSSTLLREVPGYFFFF), 207 to 227 (LGPVPLMLSGGFGGICLWLAV), and 237 to 257 (IQVLSMTGKQTGLVRTFLSIV). Solcar repeat units lie at residues 7 to 91 (IQAA…CQQV), 104 to 197 (LSDL…SRSF), and 207 to 293 (LGPV…SRKL).

It belongs to the mitochondrial carrier (TC 2.A.29) family. In terms of tissue distribution, widely expressed, with highest levels in the liver, testis and kidney. In the brain, expressed at high levels in the hypothalamus.

Its subcellular location is the mitochondrion inner membrane. The protein resides in the mitochondrion membrane. It carries out the reaction L-citrulline(in) + L-ornithine(out) + H(+)(in) = L-citrulline(out) + L-ornithine(in) + H(+)(out). The enzyme catalyses L-ornithine(in) + L-arginine(out) = L-ornithine(out) + L-arginine(in). It catalyses the reaction L-ornithine(out) + L-lysine(in) = L-ornithine(in) + L-lysine(out). The catalysed reaction is L-lysine(out) + H(+)(in) = L-lysine(in) + H(+)(out). It carries out the reaction L-ornithine(out) + H(+)(in) = L-ornithine(in) + H(+)(out). Inhibited by pyridoxal 5'-phosphate as well as by mercurials (mersalyl, p-chloromercuribenzene sulfonate, and mercuric chloride), N-ethylmaleimide and spermine. Its function is as follows. Mitochondrial ornithine-citrulline antiporter. Catalyzes the exchange between cytosolic ornithine and mitochondrial citrulline plus an H(+), the proton compensates the positive charge of ornithine thus leading to an electroneutral transport. Plays a crucial role in the urea cycle, by connecting the cytosolic and the intramitochondrial reactions of the urea cycle. Lysine and arginine are also transported by the antiport mechanism. In addition, catalyzes an electroneutral exchange of ornithine or lysine for H(+), a reaction driven by the pH gradient across the inner membrane. This Mus musculus (Mouse) protein is Mitochondrial ornithine transporter 1.